The primary structure comprises 509 residues: 3-octaprenyl-4-hydroxybenzoate carboxy-lyase (509 aa).

A Mn(2+)-binding site is contributed by asparagine 179. Prenylated FMN contacts are provided by residues isoleucine 182 to arginine 184, arginine 196 to leucine 198, and arginine 201 to glycine 202. Glutamate 245 serves as a coordination point for Mn(2+). Aspartate 304 functions as the Proton donor in the catalytic mechanism.

The protein belongs to the UbiD family. Homohexamer. Prenylated FMN serves as cofactor. Mn(2+) is required as a cofactor.

The protein resides in the cell membrane. The enzyme catalyses a 4-hydroxy-3-(all-trans-polyprenyl)benzoate + H(+) = a 2-(all-trans-polyprenyl)phenol + CO2. Its pathway is cofactor biosynthesis; ubiquinone biosynthesis. Its function is as follows. Catalyzes the decarboxylation of 3-octaprenyl-4-hydroxy benzoate to 2-octaprenylphenol, an intermediate step in ubiquinone biosynthesis. This Cupriavidus pinatubonensis (strain JMP 134 / LMG 1197) (Cupriavidus necator (strain JMP 134)) protein is 3-octaprenyl-4-hydroxybenzoate carboxy-lyase.